We begin with the raw amino-acid sequence, 535 residues long: Secreted lipase 5 (535 aa).

Residues 1-17 (MHLKSLLLAALPLLLEA) form the signal peptide. Residues asparagine 32 and asparagine 119 are each glycosylated (N-linked (GlcNAc...) asparagine). Catalysis depends on serine 241, which acts as the Acyl-ester intermediate. 4 N-linked (GlcNAc...) asparagine glycosylation sites follow: asparagine 282, asparagine 341, asparagine 347, and asparagine 432.

This sequence belongs to the type-B carboxylesterase/lipase family.

The protein localises to the secreted. It catalyses the reaction a carboxylic ester + H2O = an alcohol + a carboxylate + H(+). Functionally, secreted lipase involved in plant virulence. Has a substrate preference for p-nitrophenyl esters with a carbon chain length of C8 (p-nitrophenyl caprylate). In Gibberella zeae (strain ATCC MYA-4620 / CBS 123657 / FGSC 9075 / NRRL 31084 / PH-1) (Wheat head blight fungus), this protein is Secreted lipase 5.